Here is a 483-residue protein sequence, read N- to C-terminus: Probable glycosyltransferase 6 (483 aa).

The Cytoplasmic portion of the chain corresponds to 1 to 40 (MAASETAPFGVSAASKGGGGVAGARAQHGQLAVAGRVHDA). The helical; Signal-anchor for type II membrane protein transmembrane segment at 41–61 (LVFAAGAVAAVLVLLATASFL) threads the bilayer. Topologically, residues 62–483 (SPMPVTNLVA…PLPFDYPAAR (422 aa)) are lumenal. Asn144 carries N-linked (GlcNAc...) asparagine glycosylation.

The protein belongs to the glycosyltransferase 34 family.

It is found in the golgi apparatus membrane. Probable glycosyltransferase that may be involved in the biosynthesis of xyloglucan. This Oryza sativa subsp. japonica (Rice) protein is Probable glycosyltransferase 6.